The following is a 425-amino-acid chain: Serine/threonine transporter SstT (425 aa).

Helical transmembrane passes span 11–31 (FLNGSLVLQIVIGIVAGLILA), 43–63 (FLGSLFVSALKAVAPILVFVL), 91–111 (LFAASTAVMVSYFFPTTLVLV), 141–161 (ALVSGNFIGILAWAAGLGFAL), 182–202 (IVHLVIRFAPLGIFGLVAGTI), 216–236 (LLAVLLGCMILIALVINPIIV), 290–310 (IPLGATINMAGASITITVLTL), 316–336 (LGIEFDIATAILLSVVAAVSA), and 363–383 (VAMQVVAIGFIIGVVQDSAET).

Belongs to the dicarboxylate/amino acid:cation symporter (DAACS) (TC 2.A.23) family.

It is found in the cell inner membrane. The catalysed reaction is L-serine(in) + Na(+)(in) = L-serine(out) + Na(+)(out). It carries out the reaction L-threonine(in) + Na(+)(in) = L-threonine(out) + Na(+)(out). Functionally, involved in the import of serine and threonine into the cell, with the concomitant import of sodium (symport system). This Psychromonas ingrahamii (strain DSM 17664 / CCUG 51855 / 37) protein is Serine/threonine transporter SstT.